The following is a 132-amino-acid chain: Large-conductance mechanosensitive channel (132 aa).

3 consecutive transmembrane segments (helical) span residues 14 to 34, 38 to 58, and 69 to 89; these read VIDLAVGVVIGAAFGKIVSSL, IITPLLGMVLGGVDFTGLKIT, and FIQTIFDFLIIAAAIFMFVKV.

It belongs to the MscL family. In terms of assembly, homopentamer.

The protein localises to the cell membrane. Channel that opens in response to stretch forces in the membrane lipid bilayer. May participate in the regulation of osmotic pressure changes within the cell. This Bacillus thuringiensis (strain Al Hakam) protein is Large-conductance mechanosensitive channel.